A 498-amino-acid polypeptide reads, in one-letter code: Galactose-1-phosphate uridylyltransferase (498 aa).

It belongs to the galactose-1-phosphate uridylyltransferase type 2 family.

It localises to the cytoplasm. The enzyme catalyses alpha-D-galactose 1-phosphate + UDP-alpha-D-glucose = alpha-D-glucose 1-phosphate + UDP-alpha-D-galactose. It functions in the pathway carbohydrate metabolism; galactose metabolism. This chain is Galactose-1-phosphate uridylyltransferase, found in Clostridium perfringens (strain 13 / Type A).